The primary structure comprises 681 residues: MLVSWKWLSRYVDMTLSHDELVDRLSLSGLNHEGSETVDGDVVIDLEVTSNRGDCLGHIGVAREIAALTDQKLKIPTIEYQESGSAVDDSLAVTNEMPEACPRYTARVIRGVKVGDSPEWLQESLKAVGIGVVNNVVDVTNYVMMECGQPLHAFDLAKVGEGKIVVRPGKEKEQLEAIDHRNYDLNDSTCVIADSSAALAVGGVMGGASSEVTEATADIVLEAAEFVPLSVRRTARRLKLHSPSSFRFERRVDPVGIDWASRRACQLITEIAGGSVAPGVIDTAPEIPARETVLLRPKRVAALLGLEIETAELDKILRSLGCEVSAFADGLQCVPPSWRHDLTREVDLIEEVARIHGYDQIPEDSPIPVAPSSKRRFDTAMERIRGVLTAAGISEAMTPSVVTEKLDQMISPWTELPALQTRTSMLEGARTLRRSLIPSLLQSRAANWASASLVADLFEIAHVYLPAPAGSDSALLPDETYHIGLIAGEDFFALKGTIETLCDRLGIPGELTVGPVQRDGFAKGGAVELTLVGDDAKEPLRLGFLGFVDGKLVKQWKLTGRVVAAELSADVLVNQSRLVPQQQAVSSFPSIQRDLNLVLPESVRWNELAGLVRKAAKERLADLTYRETYRNEKVDGPNKKRVLFSMELQSQTETLSGGDADSIINELVASCEKQLEAVLLR.

One can recognise a B5 domain in the interval 288 to 363; the sequence is PARETVLLRP…RIHGYDQIPE (76 aa). Residues Asp-341, Asp-347, Glu-350, and Glu-351 each coordinate Mg(2+). An FDX-ACB domain is found at 586 to 681; that stretch reads SSFPSIQRDL…EKQLEAVLLR (96 aa).

This sequence belongs to the phenylalanyl-tRNA synthetase beta subunit family. Type 1 subfamily. In terms of assembly, tetramer of two alpha and two beta subunits. It depends on Mg(2+) as a cofactor.

Its subcellular location is the cytoplasm. The enzyme catalyses tRNA(Phe) + L-phenylalanine + ATP = L-phenylalanyl-tRNA(Phe) + AMP + diphosphate + H(+). The chain is Phenylalanine--tRNA ligase beta subunit from Rhodopirellula baltica (strain DSM 10527 / NCIMB 13988 / SH1).